Reading from the N-terminus, the 660-residue chain is Bifunctional polymyxin resistance protein ArnA (660 aa).

The segment at Met-1–Leu-304 is formyltransferase ArnAFT. His-104 functions as the Proton donor; for formyltransferase activity in the catalytic mechanism. Residues Arg-114 and Thr-136 to Asp-140 contribute to the (6R)-10-formyltetrahydrofolate site. The segment at Arg-314–Gln-660 is dehydrogenase ArnADH. Residues Asp-347 and Asp-368–Ile-369 each bind NAD(+). UDP-alpha-D-glucuronate-binding positions include Ala-393, Tyr-398, and Thr-432 to Ser-433. Glu-434 functions as the Proton acceptor; for decarboxylase activity in the catalytic mechanism. Residues Arg-460, Asn-492, Lys-526–Arg-535, and Tyr-613 contribute to the UDP-alpha-D-glucuronate site. Arg-619 serves as the catalytic Proton donor; for decarboxylase activity.

It in the N-terminal section; belongs to the Fmt family. UDP-L-Ara4N formyltransferase subfamily. The protein in the C-terminal section; belongs to the NAD(P)-dependent epimerase/dehydratase family. UDP-glucuronic acid decarboxylase subfamily. In terms of assembly, homohexamer, formed by a dimer of trimers.

It carries out the reaction UDP-alpha-D-glucuronate + NAD(+) = UDP-beta-L-threo-pentopyranos-4-ulose + CO2 + NADH. It catalyses the reaction UDP-4-amino-4-deoxy-beta-L-arabinose + (6R)-10-formyltetrahydrofolate = UDP-4-deoxy-4-formamido-beta-L-arabinose + (6S)-5,6,7,8-tetrahydrofolate + H(+). The protein operates within nucleotide-sugar biosynthesis; UDP-4-deoxy-4-formamido-beta-L-arabinose biosynthesis; UDP-4-deoxy-4-formamido-beta-L-arabinose from UDP-alpha-D-glucuronate: step 1/3. Its pathway is nucleotide-sugar biosynthesis; UDP-4-deoxy-4-formamido-beta-L-arabinose biosynthesis; UDP-4-deoxy-4-formamido-beta-L-arabinose from UDP-alpha-D-glucuronate: step 3/3. It participates in bacterial outer membrane biogenesis; lipopolysaccharide biosynthesis. Its function is as follows. Bifunctional enzyme that catalyzes the oxidative decarboxylation of UDP-glucuronic acid (UDP-GlcUA) to UDP-4-keto-arabinose (UDP-Ara4O) and the addition of a formyl group to UDP-4-amino-4-deoxy-L-arabinose (UDP-L-Ara4N) to form UDP-L-4-formamido-arabinose (UDP-L-Ara4FN). The modified arabinose is attached to lipid A and is required for resistance to polymyxin and cationic antimicrobial peptides. The sequence is that of Bifunctional polymyxin resistance protein ArnA from Sodalis glossinidius (strain morsitans).